Consider the following 117-residue polypeptide: Immunoglobulin heavy variable 1-69-2 (117 aa).

The N-terminal stretch at 1–19 (MDCTWRILLLVAAATGTHA) is a signal peptide. The framework-1 stretch occupies residues 20-44 (EVQLVQSGAEVKKPGATVKISCKVS). Residues 20–117 (EVQLVQSGAE…EDTAVYYCAT (98 aa)) form the Ig-like domain. Cysteine 41 and cysteine 115 form a disulfide bridge. The complementarity-determining-1 stretch occupies residues 45–52 (GYTFTDYY). A framework-2 region spans residues 53-69 (MHWVQQAPGKGLEWMGL). The complementarity-determining-2 stretch occupies residues 70–77 (VDPEDGET). The framework-3 stretch occupies residues 78 to 115 (IYAEKFQGRVTITADTSTDTAYMELSSLRSEDTAVYYC). A complementarity-determining-3 region spans residues 116–117 (AT).

As to quaternary structure, immunoglobulins are composed of two identical heavy chains and two identical light chains; disulfide-linked.

The protein resides in the secreted. It localises to the cell membrane. Functionally, v region of the variable domain of immunoglobulin heavy chains that participates in the antigen recognition. Immunoglobulins, also known as antibodies, are membrane-bound or secreted glycoproteins produced by B lymphocytes. In the recognition phase of humoral immunity, the membrane-bound immunoglobulins serve as receptors which, upon binding of a specific antigen, trigger the clonal expansion and differentiation of B lymphocytes into immunoglobulins-secreting plasma cells. Secreted immunoglobulins mediate the effector phase of humoral immunity, which results in the elimination of bound antigens. The antigen binding site is formed by the variable domain of one heavy chain, together with that of its associated light chain. Thus, each immunoglobulin has two antigen binding sites with remarkable affinity for a particular antigen. The variable domains are assembled by a process called V-(D)-J rearrangement and can then be subjected to somatic hypermutations which, after exposure to antigen and selection, allow affinity maturation for a particular antigen. This chain is Immunoglobulin heavy variable 1-69-2, found in Homo sapiens (Human).